The chain runs to 270 residues: Purine nucleoside phosphorylase BT_4389 (270 aa).

Residues histidine 79, cysteine 124, and histidine 141 each contribute to the Zn(2+) site.

Belongs to the purine nucleoside phosphorylase YfiH/LACC1 family. In terms of assembly, homodimer. Requires Cu(2+) as cofactor. It depends on Zn(2+) as a cofactor.

It carries out the reaction adenosine + phosphate = alpha-D-ribose 1-phosphate + adenine. The catalysed reaction is S-methyl-5'-thioadenosine + phosphate = 5-(methylsulfanyl)-alpha-D-ribose 1-phosphate + adenine. The enzyme catalyses inosine + phosphate = alpha-D-ribose 1-phosphate + hypoxanthine. It catalyses the reaction adenosine + H2O + H(+) = inosine + NH4(+). In terms of biological role, purine nucleoside enzyme that catalyzes the phosphorolysis of adenosine and inosine nucleosides, yielding D-ribose 1-phosphate and the respective free bases, adenine and hypoxanthine. Also catalyzes the phosphorolysis of S-methyl-5'-thioadenosine into adenine and S-methyl-5-thio-alpha-D-ribose 1-phosphate. Also has adenosine deaminase activity. The polypeptide is Purine nucleoside phosphorylase BT_4389 (Bacteroides thetaiotaomicron (strain ATCC 29148 / DSM 2079 / JCM 5827 / CCUG 10774 / NCTC 10582 / VPI-5482 / E50)).